A 261-amino-acid chain; its full sequence is Cytochrome c oxidase subunit 3 (261 aa).

The Mitochondrial matrix portion of the chain corresponds to 1–15; the sequence is MTHQTHAYHMVNPSP. Residues 16–34 traverse the membrane as a helical segment; that stretch reads WPLTGALSALLMTSGLTMW. Residues 35-40 lie on the Mitochondrial intermembrane side of the membrane; that stretch reads FHFNSM. Residues 41–66 form a helical membrane-spanning segment; the sequence is LLLSLGLLTNTLTMYQWWRDIIREST. The Mitochondrial matrix segment spans residues 67-72; that stretch reads FQGHHT. The chain crosses the membrane as a helical span at residues 73–105; that stretch reads SVVQKGLRYGMILFIISEVLFFTGFFWAFYHSS. Topologically, residues 106 to 128 are mitochondrial intermembrane; it reads LAPTPELGGCWPPTGIHPLNPLE. The helical transmembrane segment at 129–152 threads the bilayer; it reads VPLLNTSILLASGVSITWAHHSLM. At 153–155 the chain is on the mitochondrial matrix side; that stretch reads EGD. The helical transmembrane segment at 156-183 threads the bilayer; sequence RKHMIQALSITIALGVYFTLLQASEYYE. Residues 184-190 lie on the Mitochondrial intermembrane side of the membrane; it reads APFTISD. Residues 191-223 traverse the membrane as a helical segment; sequence GVYGSTFFVATGFHGLHVIIGSTFLAVCLLRQL. Topologically, residues 224–232 are mitochondrial matrix; that stretch reads KFHFTSNHH. The helical transmembrane segment at 233-256 threads the bilayer; that stretch reads FGFEAAAWYWHFVDVVWLFLYVSI. Residues 257 to 261 are Mitochondrial intermembrane-facing; it reads YWWGS.

This sequence belongs to the cytochrome c oxidase subunit 3 family. As to quaternary structure, component of the cytochrome c oxidase (complex IV, CIV), a multisubunit enzyme composed of 14 subunits. The complex is composed of a catalytic core of 3 subunits MT-CO1, MT-CO2 and MT-CO3, encoded in the mitochondrial DNA, and 11 supernumerary subunits COX4I, COX5A, COX5B, COX6A, COX6B, COX6C, COX7A, COX7B, COX7C, COX8 and NDUFA4, which are encoded in the nuclear genome. The complex exists as a monomer or a dimer and forms supercomplexes (SCs) in the inner mitochondrial membrane with NADH-ubiquinone oxidoreductase (complex I, CI) and ubiquinol-cytochrome c oxidoreductase (cytochrome b-c1 complex, complex III, CIII), resulting in different assemblies (supercomplex SCI(1)III(2)IV(1) and megacomplex MCI(2)III(2)IV(2)).

The protein resides in the mitochondrion inner membrane. It catalyses the reaction 4 Fe(II)-[cytochrome c] + O2 + 8 H(+)(in) = 4 Fe(III)-[cytochrome c] + 2 H2O + 4 H(+)(out). In terms of biological role, component of the cytochrome c oxidase, the last enzyme in the mitochondrial electron transport chain which drives oxidative phosphorylation. The respiratory chain contains 3 multisubunit complexes succinate dehydrogenase (complex II, CII), ubiquinol-cytochrome c oxidoreductase (cytochrome b-c1 complex, complex III, CIII) and cytochrome c oxidase (complex IV, CIV), that cooperate to transfer electrons derived from NADH and succinate to molecular oxygen, creating an electrochemical gradient over the inner membrane that drives transmembrane transport and the ATP synthase. Cytochrome c oxidase is the component of the respiratory chain that catalyzes the reduction of oxygen to water. Electrons originating from reduced cytochrome c in the intermembrane space (IMS) are transferred via the dinuclear copper A center (CU(A)) of subunit 2 and heme A of subunit 1 to the active site in subunit 1, a binuclear center (BNC) formed by heme A3 and copper B (CU(B)). The BNC reduces molecular oxygen to 2 water molecules using 4 electrons from cytochrome c in the IMS and 4 protons from the mitochondrial matrix. The sequence is that of Cytochrome c oxidase subunit 3 (MT-CO3) from Sus scrofa (Pig).